Consider the following 342-residue polypeptide: MKRMIALDGAQGEGGGQILRSALSLSMITGQPFTITGIRAGRAKPGLLRQHLTAVKAATEICRATVEGAELGSQRLVFRPGTVRGGDYRFAIGSAGSCTLVLQTVLPALWFADGPSRVEVSGGTDNPSAPPADFIRRVLEPLLAKIGIHQQTTLLRHGFYPVGGGVVATEVSPVASFNTLQLGERGNIVQMRGEVLLAGVPRHVAEREIATLAGSFPLHEQYIHNLPRDQGPGNTVSLEVESENITERFFVVGEKHVSAEVVAAQLVKEVKRYLASPAAVGEYLADQLVLPMALAGAGQFTVAHPSCHLLTNIAVVERFLPVRFTLAETNGVTRVMITKLTD.

ATP is bound by residues glutamine 103 and tyrosine 283–glutamine 287. The active-site Tele-AMP-histidine intermediate is histidine 308.

It belongs to the RNA 3'-terminal cyclase family. Type 1 subfamily.

Its subcellular location is the cytoplasm. It catalyses the reaction a 3'-end 3'-phospho-ribonucleotide-RNA + ATP = a 3'-end 2',3'-cyclophospho-ribonucleotide-RNA + AMP + diphosphate. Its function is as follows. Catalyzes the conversion of 3'-phosphate to a 2',3'-cyclic phosphodiester at the end of RNA. The mechanism of action of the enzyme occurs in 3 steps: (A) adenylation of the enzyme by ATP; (B) transfer of adenylate to an RNA-N3'P to produce RNA-N3'PP5'A; (C) and attack of the adjacent 2'-hydroxyl on the 3'-phosphorus in the diester linkage to produce the cyclic end product. The biological role of this enzyme is unknown but it is likely to function in some aspects of cellular RNA processing. In Shigella dysenteriae serotype 1 (strain Sd197), this protein is RNA 3'-terminal phosphate cyclase.